We begin with the raw amino-acid sequence, 679 residues long: TBC1 domain family member 23 (679 aa).

One can recognise a Rab-GAP TBC domain in the interval 38–219; the sequence is QLPADLRAKV…AIWDGYLQQA (182 aa). A Rhodanese domain is found at 327-439; the sequence is EGVRFFVVDC…LQQHLADINV (113 aa). Residues 454-468 show a composition bias toward low complexity; it reads SGSRSSINSSVDGDS. Positions 454–478 are disordered; the sequence is SGSRSSINSSVDGDSPNGSSDGKGV.

The protein localises to the golgi apparatus. It localises to the trans-Golgi network. In terms of biological role, putative Rab GTPase-activating protein which plays a role in vesicular trafficking. Involved in endosome-to-Golgi trafficking. Acts as a bridging protein by binding simultaneously to golgins, located at the trans-Golgi, and to the WASH complex, located on endosome-derived vesicles. Plays a role in brain development. May act as a general inhibitor of innate immunity signaling. The polypeptide is TBC1 domain family member 23 (TBC1D23) (Gallus gallus (Chicken)).